Consider the following 343-residue polypeptide: CMP-N-acetylneuraminate-beta-galactosamide-alpha-2,3-sialyltransferase 1 (343 aa).

Topologically, residues 1-11 (MAPMRKKSTLK) are cytoplasmic. The chain crosses the membrane as a helical; Signal-anchor for type II membrane protein span at residues 12–27 (LLTLLVLFIFLTSFFL). N-linked (GlcNAc...) asparagine glycosylation occurs at N28. Over 28 to 343 (NYSHTVVTTA…INKIRIFKGR (316 aa)) the chain is Lumenal. Cystine bridges form between C62–C67, C64–C142, and C145–C284. N82 is a glycosylation site (N-linked (GlcNAc...) asparagine). Q108 is a binding site for substrate. N-linked (GlcNAc...) asparagine glycosylation is present at N117. 8 residues coordinate substrate: N150, N173, Y233, Y269, G273, G293, H302, and H319. N-linked (GlcNAc...) asparagine glycosylation occurs at N326.

Belongs to the glycosyltransferase 29 family. In terms of processing, the soluble form derives from the membrane form by proteolytic processing. The long isoform is abundant in salivary gland, liver, lung, and colon mucosa. Both long and short forms are detected in submaxillary salivary glands.

It localises to the golgi apparatus. The protein resides in the golgi stack membrane. The protein localises to the trans-Golgi network membrane. Its subcellular location is the secreted. It catalyses the reaction a beta-D-galactosyl-(1-&gt;3)-N-acetyl-alpha-D-galactosaminyl derivative + CMP-N-acetyl-beta-neuraminate = an N-acetyl-alpha-neuraminyl-(2-&gt;3)-beta-D-galactosyl-(1-&gt;3)-N-acetyl-alpha-D-galactosaminyl derivative + CMP + H(+). The catalysed reaction is a ganglioside GM1 (d18:1(4E)) + CMP-N-acetyl-beta-neuraminate = a ganglioside GD1a (d18:1(4E)) + CMP + H(+). It carries out the reaction ganglioside GM1 (d18:1(4E)/18:0) + CMP-N-acetyl-beta-neuraminate = ganglioside GD1a (18:1(4E)/18:0) + CMP + H(+). The enzyme catalyses a ganglioside GA1 (d18:1(4E)) + CMP-N-acetyl-beta-neuraminate = a ganglioside GM1b (d18:1(4E)) + CMP + H(+). It catalyses the reaction a ganglioside GD1b + CMP-N-acetyl-beta-neuraminate = a ganglioside GT1b + CMP + H(+). The catalysed reaction is a 3-O-[beta-D-galactosyl-(1-&gt;3)-N-acetyl-alpha-D-galactosaminyl]-L-threonyl-[protein] + CMP-N-acetyl-beta-neuraminate = a 3-O-[N-acetyl-alpha-neuraminyl-(2-&gt;3)-beta-D-galactosyl-(1-&gt;3)-N-acetyl-alpha-D-galactosaminyl]-L-threonyl-[protein] + CMP + H(+). It carries out the reaction a 3-O-[beta-D-galactosyl-(1-&gt;3)-N-acetyl-alpha-D-galactosaminyl]-L-seryl-[protein] + CMP-N-acetyl-beta-neuraminate = 3-O-[N-acetyl-alpha-neuraminyl-(2-&gt;3)-beta-D-galactosyl-(1-&gt;3)-N-acetyl-alpha-D-galactosaminyl]-L-seryl-[protein] + CMP + H(+). It participates in protein modification; protein glycosylation. It functions in the pathway glycolipid biosynthesis. Its function is as follows. A beta-galactoside alpha2-&gt;3 sialyltransferase involved in terminal sialylation of glycoproteins and glycolipids. Catalyzes the transfer of sialic acid (N-acetyl-neuraminic acid; Neu5Ac) from the nucleotide sugar donor CMP-Neu5Ac onto acceptor Galbeta-(1-&gt;3)-GalNAc-terminated glycoconjugates through an alpha2-3 linkage. Adds sialic acid to the core 1 O-glycan, Galbeta-(1-&gt;3)-GalNAc-O-Ser/Thr, which is a major structure of mucin-type O-glycans. As part of a homeostatic mechanism that regulates CD8-positive T cell numbers, sialylates core 1 O-glycans of T cell glycoproteins, SPN/CD43 and PTPRC/CD45. Prevents premature apoptosis of thymic CD8-positive T cells prior to peripheral emigration, whereas in the secondary lymphoid organs controls the survival of CD8-positive memory T cells generated following a successful immune response. Transfers sialic acid to asialofetuin, presumably onto Galbeta-(1-&gt;3)-GalNAc-O-Ser. Sialylates GM1a, GA1 and GD1b gangliosides to form GD1a, GM1b and GT1b, respectively. This Sus scrofa (Pig) protein is CMP-N-acetylneuraminate-beta-galactosamide-alpha-2,3-sialyltransferase 1 (ST3GAL1).